The sequence spans 408 residues: Peptidase T (408 aa).

A Zn(2+)-binding site is contributed by His-78. Asp-80 is an active-site residue. Asp-140 lines the Zn(2+) pocket. The active-site Proton acceptor is the Glu-174. Positions 175, 197, and 379 each coordinate Zn(2+).

The protein belongs to the peptidase M20B family. Zn(2+) serves as cofactor.

Its subcellular location is the cytoplasm. It carries out the reaction Release of the N-terminal residue from a tripeptide.. Cleaves the N-terminal amino acid of tripeptides. The sequence is that of Peptidase T from Staphylococcus aureus (strain Mu3 / ATCC 700698).